Here is a 581-residue protein sequence, read N- to C-terminus: Putative aluminum-activated malate transporter 3 (581 aa).

6 helical membrane-spanning segments follow: residues 98 to 118 (MGLALTLTSILIFFKIPGLEL), 122 to 142 (YLWAILTVVVIFEFSIGATFS), 148 to 164 (GLGTLSAGGLALGMSWI), 167 to 187 (MTGNWADVFNAASIFVVAFFA), 201 to 218 (YGFRVFLLTYCYVIVSGY), and 231 to 251 (FLLIALGASVGLIVNTCIYPI).

This sequence belongs to the aromatic acid exporter (TC 2.A.85) family.

It is found in the membrane. Its function is as follows. Malate transporter. In Arabidopsis thaliana (Mouse-ear cress), this protein is Putative aluminum-activated malate transporter 3 (ALMT3).